A 253-amino-acid chain; its full sequence is Ribosomal RNA small subunit methyltransferase J (253 aa).

S-adenosyl-L-methionine is bound by residues E123–R124 and D176.

Belongs to the methyltransferase superfamily. RsmJ family.

It is found in the cytoplasm. It carries out the reaction guanosine(1516) in 16S rRNA + S-adenosyl-L-methionine = N(2)-methylguanosine(1516) in 16S rRNA + S-adenosyl-L-homocysteine + H(+). Specifically methylates the guanosine in position 1516 of 16S rRNA. The chain is Ribosomal RNA small subunit methyltransferase J from Magnetococcus marinus (strain ATCC BAA-1437 / JCM 17883 / MC-1).